The following is a 726-amino-acid chain: Catalase-peroxidase (726 aa).

The disordered stretch occupies residues 1 to 33 (MSTTDDTHNTLSTGKCPFHQGGHDRSAGAGTAS). Residues 105 to 226 (WHGAGTYRSI…LGATEMGLIY (122 aa)) constitute a cross-link (tryptophyl-tyrosyl-methioninium (Trp-Tyr) (with M-252)). The active-site Proton acceptor is H106. The tryptophyl-tyrosyl-methioninium (Tyr-Met) (with W-105) cross-link spans 226-252 (YVNPEGPDHSGEPLSAAAAIRATFGNM). Residue H267 participates in heme b binding.

This sequence belongs to the peroxidase family. Peroxidase/catalase subfamily. As to quaternary structure, homodimer or homotetramer. Heme b serves as cofactor. Formation of the three residue Trp-Tyr-Met cross-link is important for the catalase, but not the peroxidase activity of the enzyme.

The enzyme catalyses H2O2 + AH2 = A + 2 H2O. It catalyses the reaction 2 H2O2 = O2 + 2 H2O. Bifunctional enzyme with both catalase and broad-spectrum peroxidase activity. The sequence is that of Catalase-peroxidase from Salmonella heidelberg (strain SL476).